The chain runs to 263 residues: 4-hydroxy-tetrahydrodipicolinate reductase (263 aa).

Residues 7–12 (GFKGRM), 96–98 (GTT), and 122–125 (APNF) each bind NAD(+). Catalysis depends on His-152, which acts as the Proton donor/acceptor. (S)-2,3,4,5-tetrahydrodipicolinate is bound at residue His-153. The active-site Proton donor is the Lys-156. (S)-2,3,4,5-tetrahydrodipicolinate is bound at residue 162–163 (GT).

This sequence belongs to the DapB family.

The protein localises to the cytoplasm. It catalyses the reaction (S)-2,3,4,5-tetrahydrodipicolinate + NAD(+) + H2O = (2S,4S)-4-hydroxy-2,3,4,5-tetrahydrodipicolinate + NADH + H(+). It carries out the reaction (S)-2,3,4,5-tetrahydrodipicolinate + NADP(+) + H2O = (2S,4S)-4-hydroxy-2,3,4,5-tetrahydrodipicolinate + NADPH + H(+). It participates in amino-acid biosynthesis; L-lysine biosynthesis via DAP pathway; (S)-tetrahydrodipicolinate from L-aspartate: step 4/4. Catalyzes the conversion of 4-hydroxy-tetrahydrodipicolinate (HTPA) to tetrahydrodipicolinate. This Listeria innocua serovar 6a (strain ATCC BAA-680 / CLIP 11262) protein is 4-hydroxy-tetrahydrodipicolinate reductase.